Consider the following 274-residue polypeptide: 2,3,4,5-tetrahydropyridine-2,6-dicarboxylate N-succinyltransferase (274 aa).

The substrate site is built by Arg-104 and Asp-141.

This sequence belongs to the transferase hexapeptide repeat family. Homotrimer.

Its subcellular location is the cytoplasm. The catalysed reaction is (S)-2,3,4,5-tetrahydrodipicolinate + succinyl-CoA + H2O = (S)-2-succinylamino-6-oxoheptanedioate + CoA. Its pathway is amino-acid biosynthesis; L-lysine biosynthesis via DAP pathway; LL-2,6-diaminopimelate from (S)-tetrahydrodipicolinate (succinylase route): step 1/3. This is 2,3,4,5-tetrahydropyridine-2,6-dicarboxylate N-succinyltransferase from Serratia proteamaculans (strain 568).